The primary structure comprises 598 residues: Serine/threonine-protein kinase PLK1 (598 aa).

Positions 1–26 (MAQVAGKKLTVAPEAGKPPGIPGSSS) are disordered. A phosphoserine mark is found at serine 25 and serine 26. The Protein kinase domain maps to 44–296 (YLRGRFLGKG…IDDLLNDEFF (253 aa)). ATP contacts are provided by residues 50–58 (LGKGGFAKC), lysine 73, and glutamate 122. Aspartate 167 serves as the catalytic Proton acceptor. Residues 169–172 (KLGN) and aspartate 185 contribute to the ATP site. The segment at 185–212 (DFGLATKVEYDGERKKTLCGTPNYIAPE) is activation loop. Threonine 201 carries the post-translational modification Phosphothreonine. Serine 260 and serine 326 each carry phosphoserine; by autocatalysis. The D-box that targets the protein for proteasomal degradation in anaphase signature appears at 328–331 (RKPL). The disordered stretch occupies residues 336–360 (KGQDSPLVEKQSVPAKEEEMQQPES). Phosphoserine is present on serine 340. The POLO box 1 domain maps to 404-482 (WVSKWVDYSD…LKYFRNYMSE (79 aa)). The linker stretch occupies residues 487-501 (AGANITPREGDELAR). A POLO box 2 domain is found at 504-586 (FLRTWFRTRS…ARTMVEKLQS (83 aa)). The interval 532–534 (HTK) is important for interaction with phosphorylated proteins.

Belongs to the protein kinase superfamily. Ser/Thr protein kinase family. As to quaternary structure, interacts with plk1 and kif2a. Interacts with fbxo5. Post-translationally, activated by phosphorylation on Thr-201 during M phase. In terms of processing, protein levels are down-regulated by proteasomal degradation in anaphase.

The protein resides in the nucleus. It localises to the cytoplasm. It is found in the cytoskeleton. The protein localises to the microtubule organizing center. Its subcellular location is the centrosome. The protein resides in the spindle. It localises to the midbody. It carries out the reaction L-seryl-[protein] + ATP = O-phospho-L-seryl-[protein] + ADP + H(+). The enzyme catalyses L-threonyl-[protein] + ATP = O-phospho-L-threonyl-[protein] + ADP + H(+). Its function is as follows. Plays multiple essential roles during mitosis. Phosphorylates the N-terminal domain of cdc25, which leads to cyclin b-cdc2 activation and mitotic entry. Also required for organization of bipolar spindles, and for exit from mitosis. Phosphorylates tpx2. The polypeptide is Serine/threonine-protein kinase PLK1 (plk1) (Xenopus tropicalis (Western clawed frog)).